Reading from the N-terminus, the 83-residue chain is Male-specific opa-containing protein (83 aa).

A signal peptide spans 1-18; the sequence is MNFIQIAVLFVLVAVALA. The segment at 23–83 is disordered; sequence DPANLPAPEA…NVNHNVITIG (61 aa). Residues 28–49 show a composition bias toward low complexity; it reads PAPEAAAAPPAAAAAPPAAAAA. The span at 50 to 59 shows a compositional bias: pro residues; the sequence is PPAPPAPPAA.

Adult male abdomen.

Functionally, may be a male specific regulatory factor. The polypeptide is Male-specific opa-containing protein (msopa) (Drosophila melanogaster (Fruit fly)).